A 339-amino-acid chain; its full sequence is UDP-N-acetylglucosamine--N-acetylmuramyl-(pentapeptide) pyrophosphoryl-undecaprenol N-acetylglucosamine transferase (339 aa).

UDP-N-acetyl-alpha-D-glucosamine is bound by residues 11–13, Asn127, Arg170, Ser188, Ile235, and Gln280; that span reads TGG.

This sequence belongs to the glycosyltransferase 28 family. MurG subfamily.

The protein resides in the cell inner membrane. It catalyses the reaction di-trans,octa-cis-undecaprenyl diphospho-N-acetyl-alpha-D-muramoyl-L-alanyl-D-glutamyl-meso-2,6-diaminopimeloyl-D-alanyl-D-alanine + UDP-N-acetyl-alpha-D-glucosamine = di-trans,octa-cis-undecaprenyl diphospho-[N-acetyl-alpha-D-glucosaminyl-(1-&gt;4)]-N-acetyl-alpha-D-muramoyl-L-alanyl-D-glutamyl-meso-2,6-diaminopimeloyl-D-alanyl-D-alanine + UDP + H(+). It functions in the pathway cell wall biogenesis; peptidoglycan biosynthesis. Its function is as follows. Cell wall formation. Catalyzes the transfer of a GlcNAc subunit on undecaprenyl-pyrophosphoryl-MurNAc-pentapeptide (lipid intermediate I) to form undecaprenyl-pyrophosphoryl-MurNAc-(pentapeptide)GlcNAc (lipid intermediate II). The sequence is that of UDP-N-acetylglucosamine--N-acetylmuramyl-(pentapeptide) pyrophosphoryl-undecaprenol N-acetylglucosamine transferase from Thermotoga petrophila (strain ATCC BAA-488 / DSM 13995 / JCM 10881 / RKU-1).